The sequence spans 165 residues: Type II secretion system protein M (165 aa).

Residues 1-22 (MKELLAPVQAWWRSVTPREQKM) lie on the Cytoplasmic side of the membrane. A helical transmembrane segment spans residues 23–43 (VMGMGALTVLAIAYWGIWQPL). Over 44 to 165 (SERTAQAQAR…VKRLQLKRGG (122 aa)) the chain is Periplasmic.

Belongs to the GSP M family. As to quaternary structure, type II secretion system is composed of four main components: the outer membrane complex, the inner membrane complex, the cytoplasmic secretion ATPase and the periplasm-spanning pseudopilus. Forms homodimers. Interacts with EpsL/GspL. Interacts with EpsE/GspE. Interacts with EpsF/GspF.

The protein localises to the cell inner membrane. Inner membrane component of the type II secretion system required for the energy-dependent secretion of extracellular factors such as proteases and toxins from the periplasm. Plays a role in the complex assembly and recruits EpsL resulting in a stable complex in the inner membrane. Provides thus a link between the energy-providing EpsE protein in the cytoplasm and the rest of the T2SS machinery. This is Type II secretion system protein M (epsM) from Vibrio cholerae serotype O1 (strain ATCC 39315 / El Tor Inaba N16961).